The primary structure comprises 247 residues: ATP synthase subunit a, chloroplastic (247 aa).

Helical transmembrane passes span 38-58 (QVLITSWVVITILLGSVVIAV), 95-115 (VPFIGTMFLFIFVSNWSGALL), 134-154 (INTTVALALLTSAAYFYAGLS), 199-219 (LVVVVLVSLVPLVIPIPVMFL), and 220-240 (GLFTSGIQALIFATLAAAYIG).

This sequence belongs to the ATPase A chain family. In terms of assembly, F-type ATPases have 2 components, CF(1) - the catalytic core - and CF(0) - the membrane proton channel. CF(1) has five subunits: alpha(3), beta(3), gamma(1), delta(1), epsilon(1). CF(0) has four main subunits: a, b, b' and c.

The protein localises to the plastid. It localises to the chloroplast thylakoid membrane. Key component of the proton channel; it plays a direct role in the translocation of protons across the membrane. The sequence is that of ATP synthase subunit a, chloroplastic from Hordeum vulgare (Barley).